We begin with the raw amino-acid sequence, 176 residues long: Translation initiation factor IF-3 (176 aa).

It belongs to the IF-3 family. In terms of assembly, monomer.

Its subcellular location is the cytoplasm. Functionally, IF-3 binds to the 30S ribosomal subunit and shifts the equilibrium between 70S ribosomes and their 50S and 30S subunits in favor of the free subunits, thus enhancing the availability of 30S subunits on which protein synthesis initiation begins. The chain is Translation initiation factor IF-3 from Wolinella succinogenes (strain ATCC 29543 / DSM 1740 / CCUG 13145 / JCM 31913 / LMG 7466 / NCTC 11488 / FDC 602W) (Vibrio succinogenes).